We begin with the raw amino-acid sequence, 185 residues long: ATP-dependent protease subunit HslV (185 aa).

The active site involves Thr6. Na(+) is bound by residues Gly162, Cys165, and Thr168.

It belongs to the peptidase T1B family. HslV subfamily. A double ring-shaped homohexamer of HslV is capped on each side by a ring-shaped HslU homohexamer. The assembly of the HslU/HslV complex is dependent on binding of ATP.

It is found in the cytoplasm. The catalysed reaction is ATP-dependent cleavage of peptide bonds with broad specificity.. Its activity is regulated as follows. Allosterically activated by HslU binding. Functionally, protease subunit of a proteasome-like degradation complex believed to be a general protein degrading machinery. The protein is ATP-dependent protease subunit HslV of Nitratidesulfovibrio vulgaris (strain DSM 19637 / Miyazaki F) (Desulfovibrio vulgaris).